The sequence spans 345 residues: Putative [LysW]-L-2-aminoadipate/[LysW]-L-glutamate phosphate reductase (345 aa).

11–14 (SGFT) contacts NADP(+). The interval 34 to 56 (TSRSKENKTIGHSHPNLRHSDLR) is disordered. Residue C146 is part of the active site. An NADP(+)-binding site is contributed by N309.

The protein belongs to the NAGSA dehydrogenase family. Type 1 subfamily. LysY sub-subfamily.

Its subcellular location is the cytoplasm. It carries out the reaction [amino-group carrier protein]-C-terminal-N-(1-carboxy-5-oxopentan-1-yl)-L-glutamine + phosphate + NADP(+) = [amino-group carrier protein]-C-terminal-N-(1-carboxy-5-phosphooxy-5-oxopentan-1-yl)-L-glutamine + NADPH + H(+). It catalyses the reaction [amino-group carrier protein]-C-terminal-gamma-(L-glutamyl-5-semialdehyde)-L-glutamate + phosphate + NADP(+) = [amino-group carrier protein]-C-terminal-gamma-(5-phospho-L-glutamyl)-L-glutamate + NADPH + H(+). Its pathway is amino-acid biosynthesis; L-lysine biosynthesis via AAA pathway; L-lysine from L-alpha-aminoadipate (Thermus route): step 3/5. It participates in amino-acid biosynthesis; L-arginine biosynthesis. Functionally, involved in both the arginine and lysine biosynthetic pathways. In Haloarcula marismortui (strain ATCC 43049 / DSM 3752 / JCM 8966 / VKM B-1809) (Halobacterium marismortui), this protein is Putative [LysW]-L-2-aminoadipate/[LysW]-L-glutamate phosphate reductase.